Reading from the N-terminus, the 716-residue chain is DNA ligase (716 aa).

NAD(+)-binding positions include 50 to 54 (DAEYD), 99 to 100 (SL), and E132. K134 acts as the N6-AMP-lysine intermediate in catalysis. 4 residues coordinate NAD(+): R155, E192, K308, and K332. Zn(2+)-binding residues include C437, C439, C461, and C467. One can recognise a BRCT domain in the interval 638 to 716 (KSNSAVAGKT…EDEWLKLIGE (79 aa)).

The protein belongs to the NAD-dependent DNA ligase family. LigA subfamily. Mg(2+) serves as cofactor. Mn(2+) is required as a cofactor.

It carries out the reaction NAD(+) + (deoxyribonucleotide)n-3'-hydroxyl + 5'-phospho-(deoxyribonucleotide)m = (deoxyribonucleotide)n+m + AMP + beta-nicotinamide D-nucleotide.. Its function is as follows. DNA ligase that catalyzes the formation of phosphodiester linkages between 5'-phosphoryl and 3'-hydroxyl groups in double-stranded DNA using NAD as a coenzyme and as the energy source for the reaction. It is essential for DNA replication and repair of damaged DNA. This is DNA ligase from Bradyrhizobium diazoefficiens (strain JCM 10833 / BCRC 13528 / IAM 13628 / NBRC 14792 / USDA 110).